Consider the following 311-residue polypeptide: MTQKIKCALIGPGNIGTDLLAKLQRSPVLEPVWMVGIDPESDGLRRAREMGIKTTAEGVDGLLPHVLADGVQIAFDATSAYVHAENSRKLNALGVLMIDLTPAAIGPYCVPPVNLKEHLGRAEMNVNMVTCGGQATIPMVAAVSRVQPVAYGEIVATVSSRSVGPGTRKNIDEFTRTTAGAVERVGGAKKGKAIIVINPAEPPLIMRDTVHCLTETEPDQAAITASIQAMIKEVQKYVPGYKLVNGPVFDGNRVSVFLEVEGLGDYLPKYAGNLDIMTAAAARTAEMFAEEMIKGELNLRAGTAASATETA.

The active-site Acyl-thioester intermediate is C131. Residues 162–170 (SVGPGTRKN) and N273 each bind NAD(+).

This sequence belongs to the acetaldehyde dehydrogenase family.

It catalyses the reaction acetaldehyde + NAD(+) + CoA = acetyl-CoA + NADH + H(+). The polypeptide is Acetaldehyde dehydrogenase (Ralstonia pickettii (strain 12J)).